We begin with the raw amino-acid sequence, 597 residues long: UvrABC system protein C (597 aa).

Residues 15–93 (NSPGVYQYFD…IKKHQPRFNV (79 aa)) enclose the GIY-YIG domain. Residues 207-242 (KDSLQRFRNQMKQHSEKMEFEDAQRIKNKIDVLENY) form the UVR domain.

It belongs to the UvrC family. In terms of assembly, interacts with UvrB in an incision complex.

Its subcellular location is the cytoplasm. Functionally, the UvrABC repair system catalyzes the recognition and processing of DNA lesions. UvrC both incises the 5' and 3' sides of the lesion. The N-terminal half is responsible for the 3' incision and the C-terminal half is responsible for the 5' incision. This Christiangramia forsetii (strain DSM 17595 / CGMCC 1.15422 / KT0803) (Gramella forsetii) protein is UvrABC system protein C.